The following is a 743-amino-acid chain: NAD(P)H-quinone oxidoreductase subunit 5, chloroplastic (743 aa).

The next 16 helical transmembrane spans lie at 9-29 (WIIP…LLLF), 40-60 (WAFQ…NLSI), 89-109 (IDPL…LVLI), 125-145 (FAYM…SNLI), 147-167 (IYIF…FWFT), 185-205 (GDFG…SFEF), 219-239 (NEVN…GAIA), 258-278 (TPIS…FLVA), 283-303 (LFIV…ITVF), 327-347 (LGYM…FHLI), 354-374 (ALLF…VGYC), 396-416 (ISFL…CFWS), 425-445 (WLYS…TAFY), 548-568 (LFPI…GIPF), 607-627 (VFSV…YKPV), and 723-743 (YLFF…FFNL).

The protein belongs to the complex I subunit 5 family. NDH is composed of at least 16 different subunits, 5 of which are encoded in the nucleus.

The protein localises to the plastid. The protein resides in the chloroplast thylakoid membrane. It carries out the reaction a plastoquinone + NADH + (n+1) H(+)(in) = a plastoquinol + NAD(+) + n H(+)(out). The enzyme catalyses a plastoquinone + NADPH + (n+1) H(+)(in) = a plastoquinol + NADP(+) + n H(+)(out). In terms of biological role, NDH shuttles electrons from NAD(P)H:plastoquinone, via FMN and iron-sulfur (Fe-S) centers, to quinones in the photosynthetic chain and possibly in a chloroplast respiratory chain. The immediate electron acceptor for the enzyme in this species is believed to be plastoquinone. Couples the redox reaction to proton translocation, and thus conserves the redox energy in a proton gradient. This Carthamus tinctorius (Safflower) protein is NAD(P)H-quinone oxidoreductase subunit 5, chloroplastic (ndhF).